A 382-amino-acid polypeptide reads, in one-letter code: Chaperone protein DnaJ (382 aa).

The 66-residue stretch at 5 to 70 folds into the J domain; sequence DYYEVLGVSR…DKKAAYDRYG (66 aa). The segment at 141–219 adopts a CR-type zinc-finger fold; that stretch reads GVQKTINVPA…CHGAGRVEKE (79 aa). Positions 154, 157, 171, 174, 193, 196, 207, and 210 each coordinate Zn(2+). CXXCXGXG motif repeat units follow at residues 154–161, 171–178, 193–200, and 207–214; these read CDSCKGTG, CPTCSGMG, CPTCNGMG, and CKSCHGAG.

The protein belongs to the DnaJ family. As to quaternary structure, homodimer. Zn(2+) is required as a cofactor.

The protein localises to the cytoplasm. Functionally, participates actively in the response to hyperosmotic and heat shock by preventing the aggregation of stress-denatured proteins and by disaggregating proteins, also in an autonomous, DnaK-independent fashion. Unfolded proteins bind initially to DnaJ; upon interaction with the DnaJ-bound protein, DnaK hydrolyzes its bound ATP, resulting in the formation of a stable complex. GrpE releases ADP from DnaK; ATP binding to DnaK triggers the release of the substrate protein, thus completing the reaction cycle. Several rounds of ATP-dependent interactions between DnaJ, DnaK and GrpE are required for fully efficient folding. Also involved, together with DnaK and GrpE, in the DNA replication of plasmids through activation of initiation proteins. The protein is Chaperone protein DnaJ of Cereibacter sphaeroides (strain ATCC 17025 / ATH 2.4.3) (Rhodobacter sphaeroides).